The sequence spans 282 residues: Acetyl-coenzyme A carboxylase carboxyl transferase subunit beta (282 aa).

The 260-residue stretch at 23–282 (IWTKCGQCDA…MLSKLHHQQA (260 aa)) folds into the CoA carboxyltransferase N-terminal domain. Zn(2+) is bound by residues C27, C30, C46, and C49. A C4-type zinc finger spans residues 27–49 (CGQCDAVLYKTELEKQLGVCPKC).

It belongs to the AccD/PCCB family. As to quaternary structure, acetyl-CoA carboxylase is a heterohexamer composed of biotin carboxyl carrier protein (AccB), biotin carboxylase (AccC) and two subunits each of ACCase subunit alpha (AccA) and ACCase subunit beta (AccD). Requires Zn(2+) as cofactor.

Its subcellular location is the cytoplasm. The enzyme catalyses N(6)-carboxybiotinyl-L-lysyl-[protein] + acetyl-CoA = N(6)-biotinyl-L-lysyl-[protein] + malonyl-CoA. It functions in the pathway lipid metabolism; malonyl-CoA biosynthesis; malonyl-CoA from acetyl-CoA: step 1/1. In terms of biological role, component of the acetyl coenzyme A carboxylase (ACC) complex. Biotin carboxylase (BC) catalyzes the carboxylation of biotin on its carrier protein (BCCP) and then the CO(2) group is transferred by the transcarboxylase to acetyl-CoA to form malonyl-CoA. This is Acetyl-coenzyme A carboxylase carboxyl transferase subunit beta from Pseudoalteromonas atlantica (strain T6c / ATCC BAA-1087).